The chain runs to 218 residues: Ribose-5-phosphate isomerase A (218 aa).

Substrate is bound by residues 28 to 31 (SGST), 81 to 84 (DGAD), and 94 to 97 (KGGG). The Proton acceptor role is filled by Glu103. A substrate-binding site is contributed by Lys121.

This sequence belongs to the ribose 5-phosphate isomerase family. Homodimer.

The enzyme catalyses aldehydo-D-ribose 5-phosphate = D-ribulose 5-phosphate. It participates in carbohydrate degradation; pentose phosphate pathway; D-ribose 5-phosphate from D-ribulose 5-phosphate (non-oxidative stage): step 1/1. Its function is as follows. Catalyzes the reversible conversion of ribose-5-phosphate to ribulose 5-phosphate. In Dichelobacter nodosus (strain VCS1703A), this protein is Ribose-5-phosphate isomerase A.